The sequence spans 292 residues: 33 kDa chaperonin (292 aa).

2 disulfide bridges follow: Cys236-Cys238 and Cys269-Cys272.

This sequence belongs to the HSP33 family. Post-translationally, under oxidizing conditions two disulfide bonds are formed involving the reactive cysteines. Under reducing conditions zinc is bound to the reactive cysteines and the protein is inactive.

It is found in the cytoplasm. Redox regulated molecular chaperone. Protects both thermally unfolding and oxidatively damaged proteins from irreversible aggregation. Plays an important role in the bacterial defense system toward oxidative stress. This chain is 33 kDa chaperonin, found in Ruminiclostridium cellulolyticum (strain ATCC 35319 / DSM 5812 / JCM 6584 / H10) (Clostridium cellulolyticum).